A 502-amino-acid chain; its full sequence is ATP synthase subunit beta (502 aa).

Residue 153-160 (GGAGVGKT) participates in ATP binding.

It belongs to the ATPase alpha/beta chains family. F-type ATPases have 2 components, CF(1) - the catalytic core - and CF(0) - the membrane proton channel. CF(1) has five subunits: alpha(3), beta(3), gamma(1), delta(1), epsilon(1). CF(0) has three main subunits: a(1), b(2) and c(9-12). The alpha and beta chains form an alternating ring which encloses part of the gamma chain. CF(1) is attached to CF(0) by a central stalk formed by the gamma and epsilon chains, while a peripheral stalk is formed by the delta and b chains.

The protein resides in the cell membrane. It carries out the reaction ATP + H2O + 4 H(+)(in) = ADP + phosphate + 5 H(+)(out). In terms of biological role, produces ATP from ADP in the presence of a proton gradient across the membrane. The catalytic sites are hosted primarily by the beta subunits. The sequence is that of ATP synthase subunit beta from Amoebophilus asiaticus (strain 5a2).